The chain runs to 288 residues: Polyamine aminopropyltransferase (288 aa).

Residues 9–242 (SEWLDEYHQG…GLWSWTFASM (234 aa)) form the PABS domain. Gln36 contacts S-methyl-5'-thioadenosine. The spermidine site is built by His67 and Asp91. Residues Glu111 and 143–144 (NG) contribute to the S-methyl-5'-thioadenosine site. The active-site Proton acceptor is the Asp162. Residue Pro169 coordinates S-methyl-5'-thioadenosine.

It belongs to the spermidine/spermine synthase family. As to quaternary structure, homodimer or homotetramer.

It localises to the cytoplasm. It carries out the reaction S-adenosyl 3-(methylsulfanyl)propylamine + putrescine = S-methyl-5'-thioadenosine + spermidine + H(+). The protein operates within amine and polyamine biosynthesis; spermidine biosynthesis; spermidine from putrescine: step 1/1. In terms of biological role, catalyzes the irreversible transfer of a propylamine group from the amino donor S-adenosylmethioninamine (decarboxy-AdoMet) to putrescine (1,4-diaminobutane) to yield spermidine. This Prochlorococcus marinus (strain NATL2A) protein is Polyamine aminopropyltransferase.